The sequence spans 467 residues: Sodium-dependent phosphate transport protein 1 (467 aa).

N-linked (GlcNAc...) asparagine glycans are attached at residues Asn-41, Asn-49, and Asn-58. Helical transmembrane passes span 81 to 101 (GIIL…VGYF), 119 to 139 (SVLS…VVVC), 178 to 198 (FLLG…SLGW), 200 to 220 (MVFY…FVLF), 257 to 277 (AILK…FFWS), 301 to 321 (GFLS…AGQL), 339 to 359 (LFTA…PYLS), 365 to 385 (IVIF…GVFI), 401 to 421 (CSTL…GLIL), and 433 to 453 (FILM…VATA).

The protein belongs to the major facilitator superfamily. Sodium/anion cotransporter family. In terms of assembly, interacts with PDZK1. In terms of tissue distribution, expressed in kidney cortex, liver and brain but not in other tissues.

It localises to the apical cell membrane. The enzyme catalyses 3 Na(+)(out) + phosphate(out) = 3 Na(+)(in) + phosphate(in). It carries out the reaction urate(out) = urate(in). Important for the resorption of phosphate by the kidney. May be involved in actively transporting phosphate into cells via Na(+) cotransport in the renal brush border membrane. Plays a role in urate transport in the kidney. The protein is Sodium-dependent phosphate transport protein 1 (SLC17A1) of Homo sapiens (Human).